A 98-amino-acid chain; its full sequence is UPF0251 protein Sbal_3699 (98 aa).

This sequence belongs to the UPF0251 family.

This Shewanella baltica (strain OS155 / ATCC BAA-1091) protein is UPF0251 protein Sbal_3699.